A 330-amino-acid polypeptide reads, in one-letter code: Phosphate acyltransferase (330 aa).

This sequence belongs to the PlsX family. As to quaternary structure, homodimer. Probably interacts with PlsY.

The protein localises to the cytoplasm. The catalysed reaction is a fatty acyl-[ACP] + phosphate = an acyl phosphate + holo-[ACP]. It functions in the pathway lipid metabolism; phospholipid metabolism. Its function is as follows. Catalyzes the reversible formation of acyl-phosphate (acyl-PO(4)) from acyl-[acyl-carrier-protein] (acyl-ACP). This enzyme utilizes acyl-ACP as fatty acyl donor, but not acyl-CoA. This Streptococcus agalactiae serotype Ia (strain ATCC 27591 / A909 / CDC SS700) protein is Phosphate acyltransferase.